Reading from the N-terminus, the 186-residue chain is C-type lectin domain family 19 member A (186 aa).

The signal sequence occupies residues 1-19; sequence MQRWTLWAAAFLTLHSAQA. The 133-residue stretch at 47–179 folds into the C-type lectin domain; sequence FKGHCYRFFP…CSRKFPFVCK (133 aa). An N-linked (GlcNAc...) asparagine glycan is attached at Asn58. Intrachain disulfides connect Cys68–Cys178 and Cys151–Cys170.

Its subcellular location is the secreted. This Homo sapiens (Human) protein is C-type lectin domain family 19 member A.